Consider the following 463-residue polypeptide: Retinoic acid receptor RXR-gamma (463 aa).

The segment at 1-138 is modulating; that stretch reads MYGNYSHFMK…TSPGSLVKHI (138 aa). The interval 18 to 53 is disordered; that stretch reads SPGHTGSTSMSPSAALSTGKPMDSHPSYTDTPVSAP. Positions 21–33 are enriched in polar residues; it reads HTGSTSMSPSAAL. 2 consecutive NR C4-type zinc fingers follow at residues 139 to 159 and 175 to 194; these read CAICGDRSSGKHYGVYSCEGC and CRDNKDCLIDKRQRNRCQYC. The segment at residues 139–204 is a DNA-binding region (nuclear receptor); sequence CAICGDRSSG…RYQKCLVMGM (66 aa). Positions 205–230 are hinge; that stretch reads KREAVQEERQRSRERAESEAECASSG. Residues 211–222 show a composition bias toward basic and acidic residues; that stretch reads EERQRSRERAES. Residues 211–232 are disordered; the sequence is EERQRSRERAESEAECASSGHE. Residues 231–459 enclose the NR LBD domain; it reads HEDMPVERIL…TFLMEMLETP (229 aa).

Belongs to the nuclear hormone receptor family. NR2 subfamily. Homodimer. Heterodimer with a RAR molecule. Binds DNA preferentially as a RAR/RXR heterodimer. Interacts with RARA. Post-translationally, acetylated by EP300.

The protein localises to the nucleus. Its subcellular location is the cytoplasm. Receptor for retinoic acid. Retinoic acid receptors bind as heterodimers to their target response elements in response to their ligands, all-trans or 9-cis retinoic acid, and regulate gene expression in various biological processes. The RAR/RXR heterodimers bind to the retinoic acid response elements (RARE) composed of tandem 5'-AGGTCA-3' sites known as DR1-DR5. The high affinity ligand for RXRs is 9-cis retinoic acid. The chain is Retinoic acid receptor RXR-gamma (RXRG) from Pongo abelii (Sumatran orangutan).